A 720-amino-acid polypeptide reads, in one-letter code: Phenylalanine--tRNA ligase beta subunit, chloroplastic (720 aa).

One can recognise a B5 domain in the interval 319-404; it reads NSTLNIDISL…RVYGYNQFQS (86 aa). 4 residues coordinate Mg(2+): aspartate 382, aspartate 388, glutamate 391, and glutamate 392. Positions 626–719 constitute an FDX-ACB domain; it reads SKYPCITRDL…IIKKLNLEIR (94 aa).

This sequence belongs to the phenylalanyl-tRNA synthetase beta subunit family. Type 1 subfamily. As to quaternary structure, tetramer of two alpha and two beta subunits. The cofactor is Mg(2+).

It is found in the plastid. The protein localises to the chloroplast. It catalyses the reaction tRNA(Phe) + L-phenylalanine + ATP = L-phenylalanyl-tRNA(Phe) + AMP + diphosphate + H(+). The sequence is that of Phenylalanine--tRNA ligase beta subunit, chloroplastic (pheT) from Porphyra purpurea (Red seaweed).